Here is a 232-residue protein sequence, read N- to C-terminus: Orotidine 5'-phosphate decarboxylase (232 aa).

Substrate contacts are provided by residues aspartate 12, lysine 34, 61 to 70 (DMKLLDIDNT), threonine 116, arginine 177, glutamine 186, glycine 206, and arginine 207. Lysine 63 serves as the catalytic Proton donor.

It belongs to the OMP decarboxylase family. Type 1 subfamily. As to quaternary structure, homodimer.

It carries out the reaction orotidine 5'-phosphate + H(+) = UMP + CO2. Its pathway is pyrimidine metabolism; UMP biosynthesis via de novo pathway; UMP from orotate: step 2/2. In terms of biological role, catalyzes the decarboxylation of orotidine 5'-monophosphate (OMP) to uridine 5'-monophosphate (UMP). This Sinorhizobium medicae (strain WSM419) (Ensifer medicae) protein is Orotidine 5'-phosphate decarboxylase.